A 429-amino-acid chain; its full sequence is Enolase (429 aa).

(2R)-2-phosphoglycerate is bound at residue Q167. The Proton donor role is filled by E209. Mg(2+) is bound by residues D246, E289, and D316. Residues K341, R370, S371, and K392 each contribute to the (2R)-2-phosphoglycerate site. K341 acts as the Proton acceptor in catalysis.

The protein belongs to the enolase family. As to quaternary structure, component of the RNA degradosome, a multiprotein complex involved in RNA processing and mRNA degradation. Mg(2+) is required as a cofactor.

Its subcellular location is the cytoplasm. The protein resides in the secreted. The protein localises to the cell surface. The enzyme catalyses (2R)-2-phosphoglycerate = phosphoenolpyruvate + H2O. It participates in carbohydrate degradation; glycolysis; pyruvate from D-glyceraldehyde 3-phosphate: step 4/5. In terms of biological role, catalyzes the reversible conversion of 2-phosphoglycerate (2-PG) into phosphoenolpyruvate (PEP). It is essential for the degradation of carbohydrates via glycolysis. This Pseudomonas aeruginosa (strain LESB58) protein is Enolase.